Reading from the N-terminus, the 173-residue chain is Crossover junction endodeoxyribonuclease RuvC (173 aa).

Active-site residues include Asp-8, Glu-67, and Asp-139. Mg(2+) contacts are provided by Asp-8, Glu-67, and Asp-139.

This sequence belongs to the RuvC family. As to quaternary structure, homodimer which binds Holliday junction (HJ) DNA. The HJ becomes 2-fold symmetrical on binding to RuvC with unstacked arms; it has a different conformation from HJ DNA in complex with RuvA. In the full resolvosome a probable DNA-RuvA(4)-RuvB(12)-RuvC(2) complex forms which resolves the HJ. Requires Mg(2+) as cofactor.

It localises to the cytoplasm. It catalyses the reaction Endonucleolytic cleavage at a junction such as a reciprocal single-stranded crossover between two homologous DNA duplexes (Holliday junction).. Functionally, the RuvA-RuvB-RuvC complex processes Holliday junction (HJ) DNA during genetic recombination and DNA repair. Endonuclease that resolves HJ intermediates. Cleaves cruciform DNA by making single-stranded nicks across the HJ at symmetrical positions within the homologous arms, yielding a 5'-phosphate and a 3'-hydroxyl group; requires a central core of homology in the junction. The consensus cleavage sequence is 5'-(A/T)TT(C/G)-3'. Cleavage occurs on the 3'-side of the TT dinucleotide at the point of strand exchange. HJ branch migration catalyzed by RuvA-RuvB allows RuvC to scan DNA until it finds its consensus sequence, where it cleaves and resolves the cruciform DNA. In Yersinia enterocolitica serotype O:8 / biotype 1B (strain NCTC 13174 / 8081), this protein is Crossover junction endodeoxyribonuclease RuvC.